Consider the following 128-residue polypeptide: Fluoride-specific ion channel FluC (128 aa).

4 helical membrane passes run 5-25, 34-54, 67-87, and 99-119; these read LFISCGAILGASLRWAIGLLF, FGTLIANLFGCLIIGVLLGLF, FLITGFLGSLTTFSSFSSEVV, and FCVLMMHLFGCLAMTVLGIWI. Residues glycine 74 and threonine 77 each coordinate Na(+).

It belongs to the fluoride channel Fluc/FEX (TC 1.A.43) family.

It localises to the cell inner membrane. The enzyme catalyses fluoride(in) = fluoride(out). Its activity is regulated as follows. Na(+) is not transported, but it plays an essential structural role and its presence is essential for fluoride channel function. Its function is as follows. Fluoride-specific ion channel. Important for reducing fluoride concentration in the cell, thus reducing its toxicity. The polypeptide is Fluoride-specific ion channel FluC (Haemophilus influenzae (strain PittGG)).